We begin with the raw amino-acid sequence, 84 residues long: Exodeoxyribonuclease 7 small subunit (84 aa).

The protein belongs to the XseB family. Heterooligomer composed of large and small subunits.

It localises to the cytoplasm. It carries out the reaction Exonucleolytic cleavage in either 5'- to 3'- or 3'- to 5'-direction to yield nucleoside 5'-phosphates.. Bidirectionally degrades single-stranded DNA into large acid-insoluble oligonucleotides, which are then degraded further into small acid-soluble oligonucleotides. This chain is Exodeoxyribonuclease 7 small subunit, found in Herminiimonas arsenicoxydans.